The sequence spans 175 residues: Phytochrome-interacting ankyrin-repeat protein 1 (175 aa).

ANK repeat units lie at residues 30-59 (RGWTQLHIKAREGDLKAVKELLDQGADVNA), 67-96 (KGMTPLHLAAKGGHIEVMDLLLERGANMEA), and 102-131 (CGWTPLHAAAKERKREAVKFLVGNGAFLPD).

In terms of assembly, interacts with phytochrome A (PHYA), both in Pr and Pfr forms.

The protein localises to the cytoplasm. Its subcellular location is the nucleus. It localises to the mitochondrion. The polypeptide is Phytochrome-interacting ankyrin-repeat protein 1 (Arabidopsis thaliana (Mouse-ear cress)).